The sequence spans 500 residues: NAD(P)H-quinone oxidoreductase chain 4, chloroplastic (500 aa).

The next 14 helical transmembrane spans lie at 4–24, 37–57, 87–107, 113–130, 134–154, 167–187, 208–228, 242–262, 272–292, 305–325, 330–350, 386–406, 411–431, and 462–482; these read FPWL…IFFL, ICIC…HFQL, IGPI…AWPI, LFHF…GSFS, LLLF…LLAM, FILY…GVAL, VLEI…LPII, HYST…YGLI, AHSI…IYAA, IAYS…SLTD, GALL…FLAG, LALP…GIIT, VLIP…LTPI, and LFLS…PDFV.

This sequence belongs to the complex I subunit 4 family.

The protein localises to the plastid. It localises to the chloroplast thylakoid membrane. It carries out the reaction a plastoquinone + NADH + (n+1) H(+)(in) = a plastoquinol + NAD(+) + n H(+)(out). The enzyme catalyses a plastoquinone + NADPH + (n+1) H(+)(in) = a plastoquinol + NADP(+) + n H(+)(out). This is NAD(P)H-quinone oxidoreductase chain 4, chloroplastic from Atropa belladonna (Belladonna).